A 564-amino-acid polypeptide reads, in one-letter code: Potassium-transporting ATPase potassium-binding subunit (564 aa).

The next 10 membrane-spanning stretches (helical) occupy residues 4 to 24, 67 to 87, 135 to 155, 179 to 199, 258 to 278, 286 to 306, 382 to 402, 420 to 440, 487 to 507, and 528 to 548; these read YDYW…PFLG, TLAL…ILLF, VGLT…LVAL, LYGL…QGVP, FEVA…GHYV, AIIG…LWAE, AGLY…GLMI, LLVV…AIAA, LMLG…VLAL, and GPLF…LTFL.

Belongs to the KdpA family. In terms of assembly, the system is composed of three essential subunits: KdpA, KdpB and KdpC.

Its subcellular location is the cell inner membrane. Part of the high-affinity ATP-driven potassium transport (or Kdp) system, which catalyzes the hydrolysis of ATP coupled with the electrogenic transport of potassium into the cytoplasm. This subunit binds the periplasmic potassium ions and delivers the ions to the membrane domain of KdpB through an intramembrane tunnel. In Pseudomonas fluorescens (strain Pf0-1), this protein is Potassium-transporting ATPase potassium-binding subunit.